The primary structure comprises 127 residues: Snaclec macrovipecetin subunit beta (127 aa).

Cystine bridges form between C4-C15, C32-C121, and C98-C113. One can recognise a C-type lectin domain in the interval 11-122 (YEGHCYKVFD…CSRTYKFVCK (112 aa)).

In terms of assembly, heterodimer of subunits alpha and beta; disulfide-linked. Expressed by the venom gland.

It is found in the secreted. In terms of biological role, interferes with one step of hemostasis (modulation of platelet aggregation, or coagulation cascade, for example). The protein is Snaclec macrovipecetin subunit beta of Macrovipera lebetinus (Levantine viper).